The chain runs to 397 residues: Odorant receptor 59a (397 aa).

Residues 1–36 (MAEVRVDSLEFFKSHWTAWRYLGVAHFRVENWKNLY) are Cytoplasmic-facing. A helical transmembrane segment spans residues 37-57 (VFYSIVSNLLVTLCYPVHLGI). The Extracellular portion of the chain corresponds to 58–68 (SLFRNRTITED). N-linked (GlcNAc...) asparagine glycosylation is present at Asn62. A helical transmembrane segment spans residues 69–92 (ILNLTTFATCTACSVKCLLYAYNI). Over 93 to 128 (KDVLEMERLLRLLDERVVGPEQRSIYGQVRVQLRNV) the chain is Cytoplasmic. The helical transmembrane segment at 129–149 (LYVFIGIYMPCALFAELSFLF) threads the bilayer. Residues 150–179 (KEERGLMYPAWFPFDWLHSTRNYYIANAYQ) lie on the Extracellular side of the membrane. A helical membrane pass occupies residues 180-200 (IVGISFQLLQNYVSDCFPAVV). Residues 201–274 (LCLISSHIKM…IEAFISLPML (74 aa)) lie on the Cytoplasmic side of the membrane. A helical membrane pass occupies residues 275–295 (IQFTVTALNVCIGLAALVFFV). Residues 296–301 (SEPMAR) are Extracellular-facing. Residues 302-322 (MYFIFYSLAMPLQIFPSCFFG) form a helical membrane-spanning segment. Residues 323-372 (TDNEYWFGRLHYAAFSCNWHTQNRSFKRKMMLFVEQSLKKSTAVAGGMMR) are Cytoplasmic-facing. Residues 373-393 (IHLDTFFSTLKGAYSLFTIII) form a helical membrane-spanning segment. At 394-397 (RMRK) the chain is on the extracellular side.

Belongs to the insect chemoreceptor superfamily. Heteromeric odorant receptor channel (TC 1.A.69) family. Or2a subfamily. In terms of assembly, interacts with Orco. Complexes exist early in the endomembrane system in olfactory sensory neurons (OSNs), coupling these complexes to the conserved ciliary trafficking pathway. In terms of tissue distribution, expressed in neurons of the third antennal segment.

It localises to the cell membrane. Functionally, odorant receptor which mediates acceptance or avoidance behavior, depending on its substrates. The odorant receptor repertoire encodes a large collection of odor stimuli that vary widely in identity, intensity, and duration. May form a complex with Orco to form odorant-sensing units, providing sensitive and prolonged odorant signaling and calcium permeability. Involved in the behavioral responses to ethyl acetate, anisole, hexanoic acid, and pyrazines. This is Odorant receptor 59a (Or59a) from Drosophila melanogaster (Fruit fly).